A 739-amino-acid chain; its full sequence is Alcohol dehydrogenase (quinone), dehydrogenase subunit (739 aa).

Residues 1–35 form the signal peptide; it reads MISAVFGKRRSLSRTLTAGTICAALISGYATMASA. E97 is a pyrroloquinoline quinone binding site. Residues C143 and C144 are joined by a disulfide bond. Residue R149 coordinates pyrroloquinoline quinone. Ca(2+) is bound at residue E217. Pyrroloquinoline quinone is bound at residue T279. N299 and D344 together coordinate Ca(2+). D344 serves as the catalytic Proton acceptor. K371 and I585 together coordinate pyrroloquinoline quinone. A Cytochrome c domain is found at 635–739; that stretch reads FDSKRTDNGY…NADGIPEQLP (105 aa). Positions 651, 654, 655, and 694 each coordinate heme c.

This sequence belongs to the bacterial PQQ dehydrogenase family. The alcohol dehydrogenase multicomponent enzyme system is composed of a dehydrogenase subunit I (AdhA) and a cytochrome c subunit II (AdhB). It depends on pyrroloquinoline quinone as a cofactor. Ca(2+) is required as a cofactor. Requires heme c as cofactor.

It is found in the cell membrane. The catalysed reaction is ethanol + a ubiquinone = a ubiquinol + acetaldehyde. Dehydrogenase component of the alcohol dehydrogenase multicomponent enzyme system which is involved in the production of acetic acid and in the ethanol oxidase respiratory chain. Quinohemoprotein alcohol dehydrogenase (ADH) catalyzes the oxidation of ethanol to acetaldehyde by transferring electrons to the ubiquinone embedded in the membrane phospholipids. The electrons transfer from ethanol to membranous ubiquinone occurs from pyrroloquinoline quinone (PQQ) to one heme c in subunit I (AdhA), and finally to two heme c in subunit II (AdhB). Besides ubiquinone reduction, ADH also has a ubiquinol (QH2) oxidation reaction which mediates electron transfer from ubiquinol to the non-energy generating bypass oxidase system. The electrons transfer occurs from ubiquinol (QH2) to the additional heme c within subunit II (AdhB). This Komagataeibacter europaeus (Gluconacetobacter europaeus) protein is Alcohol dehydrogenase (quinone), dehydrogenase subunit.